The primary structure comprises 299 residues: 4-hydroxy-tetrahydrodipicolinate synthase (299 aa).

Thr47 provides a ligand contact to pyruvate. The active-site Proton donor/acceptor is Tyr136. Lys164 serves as the catalytic Schiff-base intermediate with substrate. Pyruvate is bound at residue Ala205.

The protein belongs to the DapA family. Homotetramer; dimer of dimers.

The protein localises to the cytoplasm. It carries out the reaction L-aspartate 4-semialdehyde + pyruvate = (2S,4S)-4-hydroxy-2,3,4,5-tetrahydrodipicolinate + H2O + H(+). It functions in the pathway amino-acid biosynthesis; L-lysine biosynthesis via DAP pathway; (S)-tetrahydrodipicolinate from L-aspartate: step 3/4. Its function is as follows. Catalyzes the condensation of (S)-aspartate-beta-semialdehyde [(S)-ASA] and pyruvate to 4-hydroxy-tetrahydrodipicolinate (HTPA). The polypeptide is 4-hydroxy-tetrahydrodipicolinate synthase (Pediococcus pentosaceus (strain ATCC 25745 / CCUG 21536 / LMG 10740 / 183-1w)).